The sequence spans 534 residues: Probable protein kinase UbiB (534 aa).

The helical transmembrane segment at Asp-23–Trp-43 threads the bilayer. The 368-residue stretch at Arg-125–Leu-492 folds into the Protein kinase domain. Residues Leu-131 to Val-139 and Lys-153 each bind ATP. Asp-288 serves as the catalytic Proton acceptor. 2 helical membrane-spanning segments follow: residues Trp-490–Gly-510 and Leu-512–Val-532.

Belongs to the ABC1 family. UbiB subfamily.

The protein resides in the cell inner membrane. Its pathway is cofactor biosynthesis; ubiquinone biosynthesis [regulation]. Is probably a protein kinase regulator of UbiI activity which is involved in aerobic coenzyme Q (ubiquinone) biosynthesis. This chain is Probable protein kinase UbiB, found in Pseudomonas fluorescens (strain Pf0-1).